The primary structure comprises 198 residues: MPDSALPPCSILLLAGGRGQRMGGRDKGLIEWQGLPLIAHLHRLVRPLTDDLIVSCNRNQERYAAYADRLVSDDSRDFPGPLAGIRAGLAVARHPWLLVLPCDAPRIDRALLETLLQAAGRTPARPWMLRCGGQWEPLFSLIPTHLAEEIEHAWRQGDRSPRHVLLPLGAEAIELAAGDPRLANLNTPELLANHRELK.

GTP-binding positions include 14-16, K27, D73, and D103; that span reads LAG. D103 provides a ligand contact to Mg(2+).

The protein belongs to the MobA family. Monomer. Mg(2+) serves as cofactor.

Its subcellular location is the cytoplasm. The enzyme catalyses Mo-molybdopterin + GTP + H(+) = Mo-molybdopterin guanine dinucleotide + diphosphate. Transfers a GMP moiety from GTP to Mo-molybdopterin (Mo-MPT) cofactor (Moco or molybdenum cofactor) to form Mo-molybdopterin guanine dinucleotide (Mo-MGD) cofactor. In Pseudomonas aeruginosa (strain LESB58), this protein is Molybdenum cofactor guanylyltransferase.